The sequence spans 239 residues: Protein GrpE (239 aa).

2 disordered regions span residues 1-54 (MIEN…ELKN) and 208-239 (SMGP…SEDV). Polar residues predominate over residues 19-42 (QDNALENVSSAQELTTENNELSSQ). Basic and acidic residues predominate over residues 43-53 (KTEEINTEELK). The span at 228 to 239 (DIDSEENTSEDV) shows a compositional bias: acidic residues.

It belongs to the GrpE family. Homodimer.

The protein resides in the cytoplasm. In terms of biological role, participates actively in the response to hyperosmotic and heat shock by preventing the aggregation of stress-denatured proteins, in association with DnaK and GrpE. It is the nucleotide exchange factor for DnaK and may function as a thermosensor. Unfolded proteins bind initially to DnaJ; upon interaction with the DnaJ-bound protein, DnaK hydrolyzes its bound ATP, resulting in the formation of a stable complex. GrpE releases ADP from DnaK; ATP binding to DnaK triggers the release of the substrate protein, thus completing the reaction cycle. Several rounds of ATP-dependent interactions between DnaJ, DnaK and GrpE are required for fully efficient folding. The chain is Protein GrpE from Prochlorococcus marinus (strain AS9601).